A 100-amino-acid polypeptide reads, in one-letter code: Urease subunit gamma (100 aa).

Belongs to the urease gamma subunit family. Heterotrimer of UreA (gamma), UreB (beta) and UreC (alpha) subunits. Three heterotrimers associate to form the active enzyme.

It localises to the cytoplasm. The enzyme catalyses urea + 2 H2O + H(+) = hydrogencarbonate + 2 NH4(+). Its pathway is nitrogen metabolism; urea degradation; CO(2) and NH(3) from urea (urease route): step 1/1. The chain is Urease subunit gamma from Mycobacterium ulcerans (strain Agy99).